The sequence spans 862 residues: DNA topoisomerase 3-beta-1 (862 aa).

The 151-residue stretch at 3–153 (TVLMVAEKPS…EKTVFRARFS (151 aa)) folds into the Toprim domain. One can recognise a Topo IA-type catalytic domain in the interval 171–593 (DHNEALSVDA…HTLDIFKRKF (423 aa)). Tyrosine 336 functions as the O-(5'-phospho-DNA)-tyrosine intermediate in the catalytic mechanism. The disordered stretch occupies residues 820–855 (HPMHRGGPGRRQGRGRGRGRRPPGKPNPRRPKDKMS). Residues 821–851 (PMHRGGPGRRQGRGRGRGRRPPGKPNPRRPK) are compositionally biased toward basic residues.

The protein belongs to the type IA topoisomerase family. As to expression, highly expressed in testis.

The catalysed reaction is ATP-independent breakage of single-stranded DNA, followed by passage and rejoining.. Functionally, releases the supercoiling and torsional tension of DNA introduced during the DNA replication and transcription by transiently cleaving and rejoining one strand of the DNA duplex. Introduces a single-strand break via transesterification at a target site in duplex DNA. The scissile phosphodiester is attacked by the catalytic tyrosine of the enzyme, resulting in the formation of a DNA-(5'-phosphotyrosyl)-enzyme intermediate and the expulsion of a 3'-OH DNA strand. The free DNA strand than undergoes passage around the unbroken strand thus removing DNA supercoils. Finally, in the religation step, the DNA 3'-OH attacks the covalent intermediate to expel the active-site tyrosine and restore the DNA phosphodiester backbone. Possesses negatively supercoiled DNA relaxing activity. This chain is DNA topoisomerase 3-beta-1 (Top3b), found in Mus musculus (Mouse).